Reading from the N-terminus, the 211-residue chain is Major fimbrial subunit (211 aa).

A signal peptide spans 1 to 20 (MKKTLLGSLILLAFAGNVQA). Cys-43 and Cys-83 are joined by a disulfide.

The protein belongs to the fimbrial protein family.

It is found in the fimbrium. In terms of biological role, mediates adherence to oropharyngeal epithelial cells. Helps the airway colonization process. The sequence is that of Major fimbrial subunit (hifA) from Haemophilus influenzae.